The sequence spans 273 residues: ABC transporter glutamine-binding protein GlnH (273 aa).

Positions 1–20 (MKKIFSLALISLFAVILLAA) are cleaved as a signal peptide. Cys-21 carries the N-palmitoyl cysteine lipid modification. Cys-21 carries S-diacylglycerol cysteine lipidation.

This sequence belongs to the bacterial solute-binding protein 3 family. As to quaternary structure, the complex is composed of two ATP-binding proteins (GlnQ), two transmembrane proteins (GlnM and GlnP) and a solute-binding protein (GlnH).

Its subcellular location is the cell membrane. Its function is as follows. Part of the ABC transporter complex GlnHMPQ involved in glutamine transport. This Bacillus subtilis (strain 168) protein is ABC transporter glutamine-binding protein GlnH (glnH).